The primary structure comprises 202 residues: MASPRLLALLLLLVGAFNAAAAESIRETEVINPQDLLEGRYFSGDLPDDEDVGGPGQEPDDFEWSGSGDLEGPEDKHMLPEVTHPLVPLDNHIPERTGPGGRVPTEPKELEENEVIPKRMSPFDGDEDVSNKVSMSSTAQGSNIFERTEVLSALIVGGIVGILFAVFLVLLLVYRMKKKDEGSYDLGKKPIYKKAPTNEFYA.

The first 22 residues, 1 to 22 (MASPRLLALLLLLVGAFNAAAA), serve as a signal peptide directing secretion. Residues 23 to 152 (ESIRETEVIN…NIFERTEVLS (130 aa)) are Extracellular-facing. Disordered regions lie at residues 41-75 (YFSG…GPED) and 87-112 (VPLD…ELEE). S43 carries O-linked (Xyl...) (glycosaminoglycan) serine glycosylation. Residues 46-63 (LPDDEDVGGPGQEPDDFE) show a composition bias toward acidic residues. S65 and S67 each carry an O-linked (Xyl...) (glycosaminoglycan) serine glycan. The chain crosses the membrane as a helical span at residues 153-173 (ALIVGGIVGILFAVFLVLLLV). Residues 174 to 202 (YRMKKKDEGSYDLGKKPIYKKAPTNEFYA) are Cytoplasmic-facing.

It belongs to the syndecan proteoglycan family. As to quaternary structure, homodimer. Interacts with CDCP1 and SDCBP. Interacts (via its cytoplasmic domain) with GIPC (via its PDZ domain). Interacts (via its cytoplasmic domain) with NUDT16L1. Interacts with DNM2; this interaction is markedly enhanced at focal ahesion site upon induction of focal adhesions and stress-fiber formation. Shedding, cleavage of the extracellular domain to release a soluble form, is enhanced by a number of factors such as heparanase, growth factor receptor action for example by thrombin or EGF. Physiological events such as stress or wound healing can activate the shedding. PMA-mediated shedding is inhibited by TIMP3. Post-translationally, O-glycosylated; contains both chondroitin sulfate and heparan sulfate. Ser-43, Ser-65 and Ser-67 can all be modified by either chondroitin sulfate or heparan sulfate, and the protein exists in forms that contain only chondroitin sulfate, only heparan sulfate and both chondroitin sulfate and heparan sulfate.

Its subcellular location is the membrane. It localises to the secreted. Cell surface proteoglycan which regulates exosome biogenesis in concert with SDCBP and PDCD6IP. The protein is Syndecan-4 of Sus scrofa (Pig).